The sequence spans 520 residues: 2-isopropylmalate synthase (520 aa).

A Pyruvate carboxyltransferase domain is found at isoleucine 12 to valine 274. Positions 21, 209, 211, and 245 each coordinate Mn(2+). Residues arginine 396–alanine 520 form a regulatory domain region.

It belongs to the alpha-IPM synthase/homocitrate synthase family. LeuA type 1 subfamily. Homodimer. Requires Mn(2+) as cofactor.

It is found in the cytoplasm. The enzyme catalyses 3-methyl-2-oxobutanoate + acetyl-CoA + H2O = (2S)-2-isopropylmalate + CoA + H(+). It participates in amino-acid biosynthesis; L-leucine biosynthesis; L-leucine from 3-methyl-2-oxobutanoate: step 1/4. In terms of biological role, catalyzes the condensation of the acetyl group of acetyl-CoA with 3-methyl-2-oxobutanoate (2-ketoisovalerate) to form 3-carboxy-3-hydroxy-4-methylpentanoate (2-isopropylmalate). This Xanthomonas oryzae pv. oryzae (strain MAFF 311018) protein is 2-isopropylmalate synthase.